We begin with the raw amino-acid sequence, 121 residues long: MPYLSVAKFGGTSVANHDAMTACAKIVIADPNTRVVVLSASAGVTNLLVALANGVKATEREKLIGNDLHITSGVAKRIFDTVQSYNVRMISYGASTNNVCMLVQSEHSDEIVRSLHKSLFE.

It belongs to the aspartokinase family.

This chain is Putative inactive aspartokinase 3 HI_1632, found in Haemophilus influenzae (strain ATCC 51907 / DSM 11121 / KW20 / Rd).